We begin with the raw amino-acid sequence, 627 residues long: Serine/threonine-protein phosphatase 2A 56 kDa regulatory subunit delta 2 isoform (627 aa).

Residues 1–37 (MKGLRSKFVKALSLKDEQGSHKNGHSKSHYISKNGSY) are disordered.

The protein belongs to the phosphatase 2A regulatory subunit B family. PP2A consists of a common heterodimeric core enzyme, composed of a 36 kDa catalytic subunit (subunit C) and a 65 kDa constant regulatory subunit (PR65 or subunit A), that associates with a variety of regulatory subunits. Proteins that associate with the core dimer include three families of regulatory subunits B (the R2/B/PR55/B55, R3/B''/PR72/PR130/PR59 and R5/B'/B56 families), the 48 kDa variable regulatory subunit, viral proteins, and cell signaling molecules.

It is found in the cytoplasm. The protein localises to the cell tip. The B regulatory subunit might modulate substrate selectivity and catalytic activity, and might also direct the localization of the catalytic enzyme to a particular subcellular compartment. Has a role in cell shape control and septum formation. The chain is Serine/threonine-protein phosphatase 2A 56 kDa regulatory subunit delta 2 isoform (par2) from Schizosaccharomyces pombe (strain 972 / ATCC 24843) (Fission yeast).